Consider the following 369-residue polypeptide: Anhydro-N-acetylmuramic acid kinase (369 aa).

11–18 (GTSMDAVD) provides a ligand contact to ATP.

It belongs to the anhydro-N-acetylmuramic acid kinase family.

It catalyses the reaction 1,6-anhydro-N-acetyl-beta-muramate + ATP + H2O = N-acetyl-D-muramate 6-phosphate + ADP + H(+). The protein operates within amino-sugar metabolism; 1,6-anhydro-N-acetylmuramate degradation. It functions in the pathway cell wall biogenesis; peptidoglycan recycling. Its function is as follows. Catalyzes the specific phosphorylation of 1,6-anhydro-N-acetylmuramic acid (anhMurNAc) with the simultaneous cleavage of the 1,6-anhydro ring, generating MurNAc-6-P. Is required for the utilization of anhMurNAc either imported from the medium or derived from its own cell wall murein, and thus plays a role in cell wall recycling. This is Anhydro-N-acetylmuramic acid kinase from Idiomarina loihiensis (strain ATCC BAA-735 / DSM 15497 / L2-TR).